A 647-amino-acid chain; its full sequence is MGKIRKLDDQLSNLIAAGEVVERPASVVKELVENSIDANSTSIEIHLEEAGLSKIRIIDNGDGIAEEDCIVAFERHATSKIKDENDLFRIRTLGFRGEALPSIASVSELELITSTGDAPGTHLIIKGGDIIKQEKTASRKGTDITVQNLFFNTPARLKYMKTIHTELGNITDIVYRIAMSHPEVSLKLFHNEKKLLHTSGNGDVRQVLASIYSIQVAKKLVPIEAESLDFTIKGYVTLPEVTRASRNYMSTIVNGRYVRNFVLMKAIQQGYHTLLPVGRYPIGFLSIEMDPMLVDVNVHPAKLEVRFSKEQELLKLIEETLQTAFKKIQLIPDAGVTTKKKEKDESVQEQFQFEHAKPKEPSMPDIILPMGMDEKQEEPLAVKQPAQLWQPPKQEWQPPQSLVREEQSWQPSTKPIMEEPIREEKSWDSNEEDFELEELEEEVREIEEIEMNGNDLPPLYPIGQMHGTYIFAQNDKGLYMIDQHAAQERINYEYFRDKVGRVAQEVQELLVPYRIDLSLTEFLRVEEQLEELKKVGLFLEQFGHQSFIVRSHPTWFPKGQETEIIDEMMEQVVKLKKVDIKKLREEAAIMMSCKASIKANQYLTNDQIFALLEELRTTTNPYTCPHGRPILVHHSTYELEKMFKRVM.

Belongs to the DNA mismatch repair MutL/HexB family.

This protein is involved in the repair of mismatches in DNA. It is required for dam-dependent methyl-directed DNA mismatch repair. May act as a 'molecular matchmaker', a protein that promotes the formation of a stable complex between two or more DNA-binding proteins in an ATP-dependent manner without itself being part of a final effector complex. In Bacillus thuringiensis subsp. konkukian (strain 97-27), this protein is DNA mismatch repair protein MutL.